Here is a 280-residue protein sequence, read N- to C-terminus: Pantothenate synthetase (280 aa).

30–37 (MGYLHEGH) contributes to the ATP binding site. Residue H37 is the Proton donor of the active site. (R)-pantoate is bound at residue Q61. A beta-alanine-binding site is contributed by Q61. Residue 147–150 (GQKD) participates in ATP binding. (R)-pantoate is bound at residue Q153. ATP is bound by residues V176 and 184–187 (MSSR).

This sequence belongs to the pantothenate synthetase family. As to quaternary structure, homodimer.

The protein resides in the cytoplasm. The catalysed reaction is (R)-pantoate + beta-alanine + ATP = (R)-pantothenate + AMP + diphosphate + H(+). It functions in the pathway cofactor biosynthesis; (R)-pantothenate biosynthesis; (R)-pantothenate from (R)-pantoate and beta-alanine: step 1/1. Functionally, catalyzes the condensation of pantoate with beta-alanine in an ATP-dependent reaction via a pantoyl-adenylate intermediate. The sequence is that of Pantothenate synthetase from Thermotoga petrophila (strain ATCC BAA-488 / DSM 13995 / JCM 10881 / RKU-1).